The chain runs to 369 residues: 3,7-dimethylxanthine N-methyltransferase TCS1 (369 aa).

S-adenosyl-L-homocysteine is bound at residue Tyr-24. Thr-31 is a binding site for caffeine. Positions 66, 71, 103, 104, 138, and 139 each coordinate S-adenosyl-L-homocysteine. The caffeine site is built by Tyr-156, His-159, and Trp-160. A Mg(2+)-binding site is contributed by Asn-177. Arg-225 lines the caffeine pocket. 3 residues coordinate Mg(2+): Asp-263, Phe-265, and Asn-266. A caffeine-binding site is contributed by Phe-321.

This sequence belongs to the methyltransferase superfamily. Type-7 methyltransferase family. Mg(2+) is required as a cofactor.

The enzyme catalyses 1,7-dimethylxanthine + S-adenosyl-L-methionine = caffeine + S-adenosyl-L-homocysteine + H(+). It catalyses the reaction theobromine + S-adenosyl-L-methionine = caffeine + S-adenosyl-L-homocysteine + H(+). The catalysed reaction is 7-methylxanthine + S-adenosyl-L-methionine = theobromine + S-adenosyl-L-homocysteine + H(+). Its pathway is alkaloid biosynthesis. In terms of biological role, involved in the biosynthesis of caffeine in cv. Puer. Involved in the biosynthesis of theacrine in cv. Kucha, a caffeine-like xanthine alkaloid with diverse beneficial biological activities including anti-depressive, sedative, and hypnotic activities, improving learning and memory, increasing exercise activity, and preventing nonalcoholic fatty liver disease. Catalyzes the conversion of 7-methylxanthine (7mX) to theobromine and of theobromine to caffeine. Has 3-N- and 1-N-methylation activity. The sequence is that of 3,7-dimethylxanthine N-methyltransferase TCS1 from Camellia sinensis var. assamica (Assam tea).